Here is a 315-residue protein sequence, read N- to C-terminus: Ribosomal RNA small subunit methyltransferase H (315 aa).

Residues 37 to 39 (GGH), aspartate 57, phenylalanine 83, aspartate 105, and glutamine 112 each bind S-adenosyl-L-methionine.

Belongs to the methyltransferase superfamily. RsmH family.

The protein localises to the cytoplasm. It catalyses the reaction cytidine(1402) in 16S rRNA + S-adenosyl-L-methionine = N(4)-methylcytidine(1402) in 16S rRNA + S-adenosyl-L-homocysteine + H(+). In terms of biological role, specifically methylates the N4 position of cytidine in position 1402 (C1402) of 16S rRNA. The polypeptide is Ribosomal RNA small subunit methyltransferase H (Pseudomonas putida (strain ATCC 700007 / DSM 6899 / JCM 31910 / BCRC 17059 / LMG 24140 / F1)).